The chain runs to 314 residues: MKIVLANPRGFCAGVDRAISIVERALELYEAPIYVRHEVVHNRFVVEGLKQRGAIFVEELHEVPDDNIVIFSAHGVSQAVRKEAKERALTVFDATCPLVTKVHMEVARASKKNIEVVLIGHAGHPEVEGTMGQYASDSAGMYLVETPDDVIKLNVKDPSNLHYVSQTTLSVDETADVIDELRRVFPEIQGPRKDDICYATQNRQDAVRDMASQVDVMIVVGSKNSSNSNRLRELSEKLGTTSYLIDCPEDLKEEWLTEQTKVGVTAGASAPEELVNQIIEQVKAFGGTAVEELTGREENMFFEVPKELQIKTVS.

Cys-12 serves as a coordination point for [4Fe-4S] cluster. 2 residues coordinate (2E)-4-hydroxy-3-methylbut-2-enyl diphosphate: His-41 and His-74. Dimethylallyl diphosphate-binding residues include His-41 and His-74. Positions 41 and 74 each coordinate isopentenyl diphosphate. Cys-96 lines the [4Fe-4S] cluster pocket. Position 124 (His-124) interacts with (2E)-4-hydroxy-3-methylbut-2-enyl diphosphate. His-124 provides a ligand contact to dimethylallyl diphosphate. His-124 is an isopentenyl diphosphate binding site. Glu-126 functions as the Proton donor in the catalytic mechanism. Residue Thr-167 participates in (2E)-4-hydroxy-3-methylbut-2-enyl diphosphate binding. [4Fe-4S] cluster is bound at residue Cys-197. Residues Ser-225, Ser-226, Asn-227, and Ser-269 each contribute to the (2E)-4-hydroxy-3-methylbut-2-enyl diphosphate site. Ser-225, Ser-226, Asn-227, and Ser-269 together coordinate dimethylallyl diphosphate. The isopentenyl diphosphate site is built by Ser-225, Ser-226, Asn-227, and Ser-269.

Belongs to the IspH family. [4Fe-4S] cluster is required as a cofactor.

The enzyme catalyses isopentenyl diphosphate + 2 oxidized [2Fe-2S]-[ferredoxin] + H2O = (2E)-4-hydroxy-3-methylbut-2-enyl diphosphate + 2 reduced [2Fe-2S]-[ferredoxin] + 2 H(+). The catalysed reaction is dimethylallyl diphosphate + 2 oxidized [2Fe-2S]-[ferredoxin] + H2O = (2E)-4-hydroxy-3-methylbut-2-enyl diphosphate + 2 reduced [2Fe-2S]-[ferredoxin] + 2 H(+). It participates in isoprenoid biosynthesis; dimethylallyl diphosphate biosynthesis; dimethylallyl diphosphate from (2E)-4-hydroxy-3-methylbutenyl diphosphate: step 1/1. It functions in the pathway isoprenoid biosynthesis; isopentenyl diphosphate biosynthesis via DXP pathway; isopentenyl diphosphate from 1-deoxy-D-xylulose 5-phosphate: step 6/6. In terms of biological role, catalyzes the conversion of 1-hydroxy-2-methyl-2-(E)-butenyl 4-diphosphate (HMBPP) into a mixture of isopentenyl diphosphate (IPP) and dimethylallyl diphosphate (DMAPP). Acts in the terminal step of the DOXP/MEP pathway for isoprenoid precursor biosynthesis. This Aliivibrio fischeri (strain ATCC 700601 / ES114) (Vibrio fischeri) protein is 4-hydroxy-3-methylbut-2-enyl diphosphate reductase.